The sequence spans 307 residues: Synaptophysin (307 aa).

Residues 1–19 (MDVVNQLVAGGQFRVVKEP) lie on the Cytoplasmic side of the membrane. The MARVEL domain occupies 15–222 (VVKEPLGFVK…NLWFVFKETG (208 aa)). The chain crosses the membrane as a helical span at residues 20–43 (LGFVKVLQWVFAIFAFATCGSYTG). The Vesicular segment spans residues 44–101 (ELRLSVECANKTESALNIEVEFEYPFRLHQVYFDAPSCVKGGTTKIFLVGDYSSSAEF). N-linked (GlcNAc...) asparagine glycosylation is present at Asn-53. Tyr-75 bears the Phosphotyrosine mark. A helical membrane pass occupies residues 102-125 (FVTVAVFAFLYSMGALATYIFLQN). Residues 126–132 (KYRENNK) lie on the Cytoplasmic side of the membrane. A helical transmembrane segment spans residues 133-156 (GPMMDFLATAVFAFMWLVSSSAWA). At 157-194 (KGLSDVKMATDPENIIKEMPMCRQTGNTCKELRDPVTS) the chain is on the vesicular side. Residues 195 to 218 (GLNTSVVFGFLNLVLWVGNLWFVF) traverse the membrane as a helical segment. The Cytoplasmic portion of the chain corresponds to 219–307 (KETGWAAPFM…GAPTSFSNQM (89 aa)). Thr-221 is modified (phosphothreonine). The interval 233–307 (GAPEKQPAPG…GAPTSFSNQM (75 aa)) is disordered. Residues 248–258 (AGYGQGPGGYG) show a composition bias toward gly residues. Residues 249–298 (GYGQGPGGYGPQDSYGPQGGYQPDYGQPASGGGGYGPQGDYGQQGYGQQG) are repeats, Gly-rich. A compositionally biased stretch (low complexity) spans 259-276 (PQDSYGPQGGYQPDYGQP). Residues Tyr-273 and Tyr-289 each carry the phosphotyrosine modification. The span at 277–296 (ASGGGGYGPQGDYGQQGYGQ) shows a compositional bias: gly residues.

The protein belongs to the synaptophysin/synaptobrevin family. As to quaternary structure, homohexamer or homotetramer. Interacts with SRCIN1. Interacts with VAMP2; the interaction is inhibited by interaction of VAPM2 with SEPT8. Ubiquitinated; mediated by SIAH1 or SIAH2 and leading to its subsequent proteasomal degradation. In terms of processing, phosphorylated by SRC. Expressed in the brain with expression in the cerebrum and the cerebellum.

The protein resides in the cytoplasmic vesicle. Its subcellular location is the secretory vesicle. The protein localises to the synaptic vesicle membrane. It localises to the synapse. It is found in the synaptosome. Possibly involved in structural functions as organizing other membrane components or in targeting the vesicles to the plasma membrane. Involved in the regulation of short-term and long-term synaptic plasticity. The polypeptide is Synaptophysin (Syp) (Rattus norvegicus (Rat)).